Reading from the N-terminus, the 377-residue chain is MIPKLYIHLILSLLLLPLILAQDYYAILEIDKDATEKEIKSAYRQLSKKYHPDKNAGSEEAHQKFIEVGEAYDVLSDPEKKKIYDQFGADAVKNGGGGGGPGGPGAGGFHDPFDIFERMFQGGHGGPGGGFGQRQRQRGPMIKVQEKLSLKQFYSGSSIEFTLNLNDECDACHGSGSADGKLAQCPDCQGRGVIIQVLRMGIMTQQIQQMCGRCGGTGQIIKNECKTCHGKKVTKKNKFFHVDVPPGAPRNYMDTRVGEAEKGPDFDAGDLVIEFKEKDTENMGYRRRGDNLYRTEVLSAAEALYGGWQRTIEFLDENKPVKLSRPAHVVVSNGEVEVVKGFGMPKGSKGYGDLYIDYVVVMPKTFKSGQNMLKDEL.

The first 21 residues, 1 to 21 (MIPKLYIHLILSLLLLPLILA), serve as a signal peptide directing secretion. The J domain maps to 23–88 (DYYAILEIDK…EKKKIYDQFG (66 aa)). Residues 156–237 (GSSIEFTLNL…CHGKKVTKKN (82 aa)) form a CR-type zinc finger. CXXCXGXG motif repeat units lie at residues 169–176 (CDACHGSG), 185–192 (CPDCQGRG), 211–218 (CGRCGGTG), and 225–232 (CKTCHGKK). The short motif at 288-290 (RGD) is the Cell attachment site element. The short motif at 374–377 (KDEL) is the Prevents secretion from ER element.

It is found in the endoplasmic reticulum lumen. Regulates protein folding in the endoplasmic reticulum lumen. Probably acts as a J-protein for the Hsp70-type chaperone KAR2 by stimulating its ATP-dependent reaction cycle and initiating folding reactions. Also involved in the endoplasmic reticulum-associated degradation (ERAD) process. Cooperates with KAR2 and another J-protein JEM1 to facilitate the export of ERAD substrates to the cytoplasm by maintaining them in a translocation-competent state and preventing their aggregation in the endoplasmic reticulum lumen. This chain is DnaJ-related protein SCJ1 (SCJ1), found in Saccharomyces cerevisiae (strain ATCC 204508 / S288c) (Baker's yeast).